The chain runs to 606 residues: Elongation factor 4 (606 aa).

In terms of domain architecture, tr-type G spans 10 to 192 (IRKKNFCIIA…AICKYVPSPR (183 aa)). GTP is bound by residues 22-27 (DHGKST) and 139-142 (NKID).

It belongs to the TRAFAC class translation factor GTPase superfamily. Classic translation factor GTPase family. LepA subfamily.

Its subcellular location is the cell inner membrane. The catalysed reaction is GTP + H2O = GDP + phosphate + H(+). Required for accurate and efficient protein synthesis under certain stress conditions. May act as a fidelity factor of the translation reaction, by catalyzing a one-codon backward translocation of tRNAs on improperly translocated ribosomes. Back-translocation proceeds from a post-translocation (POST) complex to a pre-translocation (PRE) complex, thus giving elongation factor G a second chance to translocate the tRNAs correctly. Binds to ribosomes in a GTP-dependent manner. In Borreliella burgdorferi (strain ATCC 35210 / DSM 4680 / CIP 102532 / B31) (Borrelia burgdorferi), this protein is Elongation factor 4.